Reading from the N-terminus, the 388-residue chain is Putative F-box protein At3g17490 (388 aa).

The 46-residue stretch at 1–46 (MMMPHLSEDLVEEILSRVPAISLKRLRYTCKQWNALFNDQRFSKKH) folds into the F-box domain.

The protein is Putative F-box protein At3g17490 of Arabidopsis thaliana (Mouse-ear cress).